We begin with the raw amino-acid sequence, 669 residues long: RNA-binding protein 14 (669 aa).

RRM domains follow at residues 1–73 and 79–149; these read MKIF…MSRP and WKIF…LSTK. Glycyl lysine isopeptide (Lys-Gly) (interchain with G-Cter in SUMO2) cross-links involve residues K126, K135, K138, K149, and K153. Disordered stretches follow at residues 148–175 and 193–232; these read TKGQ…DTAF and NSTG…PLTA. S161 is modified (phosphoserine). N6-acetyllysine; alternate is present on K164. K164 participates in a covalent cross-link: Glycyl lysine isopeptide (Lys-Gly) (interchain with G-Cter in SUMO2); alternate. The residue at position 206 (T206) is a Phosphothreonine. Phosphoserine is present on residues S220, S242, S244, S256, S272, and S280. The interval 284-303 is disordered; the sequence is PYRGQLASPSSQSAAASSLG. Low complexity predominate over residues 287-303; sequence GQLASPSSQSAAASSLG. The TRBP-interacting domain; interaction with STIL stretch occupies residues 307–354; that stretch reads GAQPSASALSSYGGQPAAASSLNSYGAQGSSLASYGNQPSSYGAQAAS. Phosphoserine occurs at positions 520, 523, 527, and 562. The segment at 569–590 is disordered; that stretch reads ANSTPPPYERTRLSPPRASYDD. Phosphothreonine is present on T572. Residue S582 is modified to Phosphoserine. A Glycyl lysine isopeptide (Lys-Gly) (interchain with G-Cter in SUMO2) cross-link involves residue K600. 6 positions are modified to phosphoserine: S618, S620, S623, S627, S643, and S649.

In terms of assembly, interacts with NCOA6, CITED1 and XRCC5/KU86. Interacts with SS18. Interacts with STIL and interferes with its interaction with CPAP. Interacts with gamma-tubulin. Part of the HDP-RNP complex composed of at least HEXIM1, PRKDC, XRCC5, XRCC6, paraspeckle proteins (SFPQ, NONO, PSPC1, RBM14, and MATR3) and NEAT1 RNA.

The protein localises to the nucleus. The protein resides in the nucleolus. Its subcellular location is the cytoplasm. Its function is as follows. May function as a nuclear receptor coactivator, enhancing transcription through other coactivators such as NCOA6 and CITED1. Regulates centriole biogenesis by suppressing the formation of aberrant centriolar protein complexes in the cytoplasm and thus preserving mitotic spindle integrity. Prevents the formation of the STIL-CPAP complex (which can induce the formation of aberrant centriolar protein complexes) by interfering with the interaction of STIL with CPAP. Plays a role in the regulation of DNA virus-mediated innate immune response by assembling into the HDP-RNP complex, a complex that serves as a platform for IRF3 phosphorylation and subsequent innate immune response activation through the cGAS-STING pathway. This Bos taurus (Bovine) protein is RNA-binding protein 14 (RBM14).